The primary structure comprises 350 residues: MAVEYNQSTDYYYEENEMNDTHDYSQYEVICIKEEVRKFAKVFLPAFFTIAFIIGLAGNSTVVAIYAYYKKRRTKTDVYILNLAVADLFLLFTLPFWAVNAVHGWVLGKIMCKVTSALYTVNFVSGMQFLACISTDRYWAVTKAPSQSGVGKPCWVICFCVWVAAILLSIPQLVFYTVNHKARCVPIFPYHLGTSMKASIQILEICIGFIIPFLIMAVCYFITAKTLIKMPNIKKSQPLKVLFTVVIVFIVTQLPYNIVKFCQAIDIIYSLITDCDMSKRMDVAIQITESIALFHSCLNPVLYVFMGTSFKNYIMKVAKKYGSWRRQRQNVEEIPFESEDATEPTSTFSI.

Residues 1–41 lie on the Extracellular side of the membrane; sequence MAVEYNQSTDYYYEENEMNDTHDYSQYEVICIKEEVRKFAK. N-linked (GlcNAc...) asparagine glycans are attached at residues Asn6 and Asn19. Residues 42–66 form a helical membrane-spanning segment; sequence VFLPAFFTIAFIIGLAGNSTVVAIY. The Cytoplasmic portion of the chain corresponds to 67–79; it reads AYYKKRRTKTDVY. The helical transmembrane segment at 80 to 99 threads the bilayer; the sequence is ILNLAVADLFLLFTLPFWAV. Residues 100 to 113 are Extracellular-facing; the sequence is NAVHGWVLGKIMCK. A disulfide bridge links Cys112 with Cys184. Residues 114 to 135 form a helical membrane-spanning segment; the sequence is VTSALYTVNFVSGMQFLACIST. The Cytoplasmic portion of the chain corresponds to 136 to 153; sequence DRYWAVTKAPSQSGVGKP. A helical membrane pass occupies residues 154 to 175; the sequence is CWVICFCVWVAAILLSIPQLVF. Over 176–199 the chain is Extracellular; the sequence is YTVNHKARCVPIFPYHLGTSMKAS. The chain crosses the membrane as a helical span at residues 200–222; the sequence is IQILEICIGFIIPFLIMAVCYFI. Residues 223 to 241 lie on the Cytoplasmic side of the membrane; sequence TAKTLIKMPNIKKSQPLKV. Residues 242–265 traverse the membrane as a helical segment; it reads LFTVVIVFIVTQLPYNIVKFCQAI. At 266–283 the chain is on the extracellular side; sequence DIIYSLITDCDMSKRMDV. Residues 284–306 form a helical membrane-spanning segment; the sequence is AIQITESIALFHSCLNPVLYVFM. Topologically, residues 307–350 are cytoplasmic; that stretch reads GTSFKNYIMKVAKKYGSWRRQRQNVEEIPFESEDATEPTSTFSI.

This sequence belongs to the G-protein coupled receptor 1 family. Atypical chemokine receptor subfamily. As to quaternary structure, forms heteromers with CXCR3. Interacts with ARRB1 and ARRB2. Post-translationally, the Ser/Thr residues in the C-terminal cytoplasmic tail may be phosphorylated. In terms of tissue distribution, expressed in circumvallate and fungiform papillae, olfactory epithelium and lung. Lower expression in liver, kidney and tongue epithelium bearing no taste papillae. Very low expression in the cerebral cortex of the brain.

It localises to the early endosome. Its subcellular location is the recycling endosome. The protein localises to the cell membrane. Functionally, atypical chemokine receptor that controls chemokine levels and localization via high-affinity chemokine binding that is uncoupled from classic ligand-driven signal transduction cascades, resulting instead in chemokine sequestration, degradation, or transcytosis. Also known as interceptor (internalizing receptor) or chemokine-scavenging receptor or chemokine decoy receptor. Acts as a receptor for chemokines CCL2, CCL8, CCL13, CCL19, CCL21 and CCL25. Chemokine-binding does not activate G-protein-mediated signal transduction but instead induces beta-arrestin recruitment, leading to ligand internalization. Plays an important role in controlling the migration of immune and cancer cells that express chemokine receptors CCR7 and CCR9, by reducing the availability of CCL19, CCL21, and CCL25 through internalization. Negatively regulates CXCR3-induced chemotaxis. Regulates T-cell development in the thymus. The sequence is that of Atypical chemokine receptor 4 (ACKR4) from Bos taurus (Bovine).